A 59-amino-acid polypeptide reads, in one-letter code: Large ribosomal subunit protein bL32 (59 aa).

Belongs to the bacterial ribosomal protein bL32 family.

The protein is Large ribosomal subunit protein bL32 of Polynucleobacter necessarius subsp. necessarius (strain STIR1).